A 211-amino-acid polypeptide reads, in one-letter code: Adenylate kinase (211 aa).

ATP is bound at residue 10 to 15 (GSGKGT). Residues 30 to 59 (STGDLFRENILNSTTLGKEIKKIVEKGELV) are NMP. AMP-binding positions include Thr-31, Arg-36, 57 to 59 (ELV), 85 to 88 (GFPR), and Gln-92. The segment at 121 to 158 (GRRICKSCNNIFNIYTLATKKNGICDVCKGDLYQREDD) is LID. Arg-122 contributes to the ATP binding site. Zn(2+) contacts are provided by Cys-125 and Cys-128. Residue 131 to 132 (IF) participates in ATP binding. 2 residues coordinate Zn(2+): Cys-145 and Cys-148. AMP contacts are provided by Arg-155 and Arg-166. An ATP-binding site is contributed by Val-194.

It belongs to the adenylate kinase family. In terms of assembly, monomer.

It is found in the cytoplasm. The enzyme catalyses AMP + ATP = 2 ADP. It functions in the pathway purine metabolism; AMP biosynthesis via salvage pathway; AMP from ADP: step 1/1. Catalyzes the reversible transfer of the terminal phosphate group between ATP and AMP. Plays an important role in cellular energy homeostasis and in adenine nucleotide metabolism. This chain is Adenylate kinase, found in Borrelia garinii subsp. bavariensis (strain ATCC BAA-2496 / DSM 23469 / PBi) (Borreliella bavariensis).